A 69-amino-acid polypeptide reads, in one-letter code: Guanine nucleotide-binding protein G(I)/G(S)/G(O) subunit gamma-T2 (69 aa).

The residue at position 66 (C66) is a Cysteine methyl ester. C66 carries the S-farnesyl cysteine lipid modification. Residues 67–69 (VLS) constitute a propeptide, removed in mature form.

This sequence belongs to the G protein gamma family. G proteins are composed of 3 units, alpha, beta and gamma.

Its subcellular location is the cell membrane. Guanine nucleotide-binding proteins (G proteins) are involved as a modulator or transducer in various transmembrane signaling systems. The beta and gamma chains are required for the GTPase activity, for replacement of GDP by GTP, and for G protein-effector interaction. The sequence is that of Guanine nucleotide-binding protein G(I)/G(S)/G(O) subunit gamma-T2 (Gngt2) from Mus musculus (Mouse).